Here is a 90-residue protein sequence, read N- to C-terminus: UPF0235 protein CPn_0497/CP_0257/CPj0497/CpB0517 (90 aa).

Belongs to the UPF0235 family.

The protein is UPF0235 protein CPn_0497/CP_0257/CPj0497/CpB0517 of Chlamydia pneumoniae (Chlamydophila pneumoniae).